A 245-amino-acid polypeptide reads, in one-letter code: tRNA pseudouridine synthase A (245 aa).

Residue aspartate 52 is the Nucleophile of the active site. A substrate-binding site is contributed by tyrosine 111.

This sequence belongs to the tRNA pseudouridine synthase TruA family. As to quaternary structure, homodimer.

It carries out the reaction uridine(38/39/40) in tRNA = pseudouridine(38/39/40) in tRNA. In terms of biological role, formation of pseudouridine at positions 38, 39 and 40 in the anticodon stem and loop of transfer RNAs. The polypeptide is tRNA pseudouridine synthase A (Afipia carboxidovorans (strain ATCC 49405 / DSM 1227 / KCTC 32145 / OM5) (Oligotropha carboxidovorans)).